The chain runs to 900 residues: Nuclear factor NF-kappa-B p100 subunit (900 aa).

Phosphoserine is present on residues serine 23 and serine 161. One can recognise an RHD domain in the interval 38–343 (PYLVIVEQPK…EVQRKRRKAL (306 aa)). The Nuclear localization signal signature appears at 337–341 (RKRRK). The segment at 346-377 (FSQPFGGGSHMGGGSGGAAGGYGGAGGGGSLG) is GRR. Positions 404 to 435 (GAQMAATVPSRDSGEEAAEPSAPSRTPQCEPQ) are disordered. Position 429 is a phosphothreonine (threonine 429). ANK repeat units follow at residues 487–519 (NGDTPLHLAIIHGQTSVIEQIVYVIHHAQDLGV), 526–555 (LHQTPLHLAVITGQTSVVSFLLRVGADPAL), 559–591 (HGDSAMHLALRAGAGAPELLRALLQSGAPAVPQ), 599–628 (EGLYPVHLAVRARSPECLDLLVDSGAEVEA), 633–663 (GGRTALHLATEMEELGLVTHLVTKLRANVNA), and 667–696 (AGNTPLHLAAGLGYPTLTRLLLKAGADIHA). A disordered region spans residues 698–734 (NEEPLCPLPSPPTSDSDSDSEGPEKDTRSSFRGHTPL). Serine 713, serine 715, and serine 717 each carry phosphoserine. The stretch at 729–758 (RGHTPLDLTCSTKVKTLLLNAAQNTMEPPL) is one ANK 7 repeat. Residues 764–851 (AGPGLSLGDT…EGVRLLRGPE (88 aa)) enclose the Death domain. Phosphoserine is present on serine 812. The segment covering 849–866 (GPETRDKLPSTAEVKEDS) has biased composition (basic and acidic residues). Residues 849–900 (GPETRDKLPSTAEVKEDSAYGSQSVEQEAEKLGPPPEPPGGLCHGHPQPQVH) are disordered. Residue lysine 855 forms a Glycyl lysine isopeptide (Lys-Gly) (interchain with G-Cter in ubiquitin) linkage. 2 positions are modified to phosphoserine; by MAP3K14: serine 866 and serine 870. The span at 888–900 (GGLCHGHPQPQVH) shows a compositional bias: low complexity.

Component of the NF-kappa-B RelB-p52 complex. Homodimer; component of the NF-kappa-B p52-p52 complex. Component of the NF-kappa-B p65-p52 complex. Component of the NF-kappa-B p52-c-Rel complex. NFKB2/p52 interacts with NFKBIE. Component of a complex consisting of the NF-kappa-B p50-p50 homodimer and BCL3. Directly interacts with MEN1. In terms of processing, while translation occurs, the particular unfolded structure after the GRR repeat promotes the generation of p52 making it an acceptable substrate for the proteasome. This process is known as cotranslational processing. The processed form is active and the unprocessed form acts as an inhibitor (I kappa B-like), being able to form cytosolic complexes with NF-kappa B, trapping it in the cytoplasm. Complete folding of the region downstream of the GRR repeat precludes processing. Post-translationally, subsequent to MAP3K14-dependent serine phosphorylation, p100 polyubiquitination occurs then triggering its proteasome-dependent processing. Constitutive processing is tightly suppressed by its C-terminal processing inhibitory domain, named PID, which contains the death domain. In terms of processing, ubiquitinated by TRIM55; leading to processing by VCP and subsequent ubiquitin-dependent protein degradation by the proteasome.

It localises to the nucleus. Its subcellular location is the cytoplasm. Functionally, NF-kappa-B is a pleiotropic transcription factor present in almost all cell types and is the endpoint of a series of signal transduction events that are initiated by a vast array of stimuli related to many biological processes such as inflammation, immunity, differentiation, cell growth, tumorigenesis and apoptosis. NF-kappa-B is a homo- or heterodimeric complex formed by the Rel-like domain-containing proteins RELA/p65, RELB, NFKB1/p105, NFKB1/p50, REL and NFKB2/p52. The dimers bind at kappa-B sites in the DNA of their target genes and the individual dimers have distinct preferences for different kappa-B sites that they can bind with distinguishable affinity and specificity. Different dimer combinations act as transcriptional activators or repressors, respectively. NF-kappa-B is controlled by various mechanisms of post-translational modification and subcellular compartmentalization as well as by interactions with other cofactors or corepressors. NF-kappa-B complexes are held in the cytoplasm in an inactive state complexed with members of the NF-kappa-B inhibitor (I-kappa-B) family. In a conventional activation pathway, I-kappa-B is phosphorylated by I-kappa-B kinases (IKKs) in response to different activators, subsequently degraded thus liberating the active NF-kappa-B complex which translocates to the nucleus. In a non-canonical activation pathway, the MAP3K14-activated CHUK/IKKA homodimer phosphorylates NFKB2/p100 associated with RelB, inducing its proteolytic processing to NFKB2/p52 and the formation of NF-kappa-B RelB-p52 complexes. The NF-kappa-B heterodimeric RelB-p52 complex is a transcriptional activator. The NF-kappa-B p52-p52 homodimer is a transcriptional repressor. NFKB2 appears to have dual functions such as cytoplasmic retention of attached NF-kappa-B proteins by p100 and generation of p52 by a cotranslational processing. The proteasome-mediated process ensures the production of both p52 and p100 and preserves their independent function. p52 binds to the kappa-B consensus sequence 5'-GGRNNYYCC-3', located in the enhancer region of genes involved in immune response and acute phase reactions. p52 and p100 are respectively the minor and major form; the processing of p100 being relatively poor. Isoform p49 is a subunit of the NF-kappa-B protein complex, which stimulates the HIV enhancer in synergy with p65. In concert with RELB, regulates the circadian clock by repressing the transcriptional activator activity of the CLOCK-BMAL1 heterodimer. The protein is Nuclear factor NF-kappa-B p100 subunit (NFKB2) of Homo sapiens (Human).